The primary structure comprises 221 residues: Adenylate kinase (221 aa).

10-15 provides a ligand contact to ATP; sequence GAGKGT. The tract at residues 30–59 is NMP; sequence STGDMLRAAVKAGTPLGVEAKKVMDAGGLV. Residues T31, R36, 57–59, 85–88, and Q92 each bind AMP; these read GLV and GFPR. The tract at residues 122-159 is LID; that stretch reads GRRVHVASGRTYHLKYNPPKTEGVDDETGEPLIQRDDD. Residues R123 and 132-133 each bind ATP; that span reads TY. The interval 138 to 159 is disordered; that stretch reads NPPKTEGVDDETGEPLIQRDDD. 2 residues coordinate AMP: R156 and R167. Residue G207 coordinates ATP.

Belongs to the adenylate kinase family. Monomer.

It localises to the cytoplasm. It catalyses the reaction AMP + ATP = 2 ADP. It participates in purine metabolism; AMP biosynthesis via salvage pathway; AMP from ADP: step 1/1. In terms of biological role, catalyzes the reversible transfer of the terminal phosphate group between ATP and AMP. Plays an important role in cellular energy homeostasis and in adenine nucleotide metabolism. This Cupriavidus taiwanensis (strain DSM 17343 / BCRC 17206 / CCUG 44338 / CIP 107171 / LMG 19424 / R1) (Ralstonia taiwanensis (strain LMG 19424)) protein is Adenylate kinase.